The sequence spans 78 residues: Acyl carrier protein (78 aa).

In terms of domain architecture, Carrier spans 4–78 (AEIRDKVYDI…QQAIDYIVKK (75 aa)). O-(pantetheine 4'-phosphoryl)serine is present on Ser-39.

The protein belongs to the acyl carrier protein (ACP) family. Post-translationally, 4'-phosphopantetheine is transferred from CoA to a specific serine of apo-ACP by AcpS. This modification is essential for activity because fatty acids are bound in thioester linkage to the sulfhydryl of the prosthetic group.

Its subcellular location is the cytoplasm. It functions in the pathway lipid metabolism; fatty acid biosynthesis. In terms of biological role, carrier of the growing fatty acid chain in fatty acid biosynthesis. The polypeptide is Acyl carrier protein (Chlorobium luteolum (strain DSM 273 / BCRC 81028 / 2530) (Pelodictyon luteolum)).